A 382-amino-acid polypeptide reads, in one-letter code: Gap junction alpha-1 protein (382 aa).

Over 2–23 (GDWSALGKLLDKVQAYSTAGGK) the chain is Cytoplasmic. Position 5 is a phosphoserine (Ser5). The chain crosses the membrane as a helical span at residues 24–44 (VWLSVLFIFRILLLGTAVESA). Residues 45 to 76 (WGDEQSAFRCNTQQPGCENVCYDKSFPISHVR) are Extracellular-facing. 2 disulfides stabilise this stretch: Cys54/Cys192 and Cys187/Cys198. A helical transmembrane segment spans residues 77–97 (FWVLQIIFVSVPTLLYLAHVF). The Cytoplasmic portion of the chain corresponds to 98–155 (YVMRKEEKLNKKEEELKVAQTDGVNVEMHLKQIEIKKFKYGIEEHGKVKMRGGLLRTY). Lys144 is covalently cross-linked (Glycyl lysine isopeptide (Lys-Gly) (interchain with G-Cter in SUMO)). A helical membrane pass occupies residues 156 to 176 (IISILFKSIFEVAFLLIQWYI). Residues 177 to 207 (YGFSLSAVYTCKRDPCPHQVDCFLSRPTEKT) lie on the Extracellular side of the membrane. The chain crosses the membrane as a helical span at residues 208–228 (IFIIFMLVVSLVSLALNIIEL). Topologically, residues 229–382 (FYVFFKGVKD…SRPRPDDLEI (154 aa)) are cytoplasmic. Lys237 is covalently cross-linked (Glycyl lysine isopeptide (Lys-Gly) (interchain with G-Cter in SUMO)). The interaction with NOV stretch occupies residues 244–382 (SDPYHATSGA…SRPRPDDLEI (139 aa)). Tyr247 is subject to Phosphotyrosine. Residues Ser255 and Ser262 each carry the phosphoserine modification. An interaction with UBQLN4 region spans residues 264–382 (KYAYFNGCSS…SRPRPDDLEI (119 aa)). Cys271 carries the S-nitrosocysteine modification. Thr275 is modified (phosphothreonine). Residues 279 to 300 (SPMSPPGYKPVTGDRNNSSCRN) are disordered. Ser306 and Ser314 each carry phosphoserine. The span at 317–332 (QNRMGQAGSTISNSHA) shows a compositional bias: polar residues. Residues 317–382 (QNRMGQAGST…SRPRPDDLEI (66 aa)) are disordered. A Phosphoserine; by CK1 modification is found at Ser325. Position 326 is a phosphothreonine (Thr326). Ser328 and Ser330 each carry phosphoserine; by CK1. A phosphoserine mark is found at Ser344 and Ser365. Low complexity predominate over residues 362-374 (RPSSRASSRASSR). Phosphoserine; by PKC/PRKCG and PKC/PRKCD is present on Ser368. A phosphoserine mark is found at Ser369 and Ser373.

Belongs to the connexin family. Alpha-type (group II) subfamily. In terms of assembly, a connexon is composed of a hexamer of connexins. Interacts with SGSM3. Interacts with RIC1/CIP150. Interacts with CNST and CSNK1D. Interacts (via C-terminus) with TJP1. Interacts (via C-terminus) with SRC (via SH3 domain). Interacts (not ubiquitinated) with UBQLN4 (via UBA domain). Interacts with NOV. Interacts with TMEM65. Interacts with ANK3/ANKG and PKP2. Phosphorylation at Ser-325, Ser-328 and Ser-330 by CK1 modulates gap junction assembly. Phosphorylated at Ser-368 by PRKCG; phosphorylation induces disassembly of gap junction plaques and inhibition of gap junction activity. Phosphorylation at Ser-368 by PRKCD triggers its internalization into small vesicles leading to proteasome-mediated degradation. In terms of processing, sumoylated with SUMO1, SUMO2 and SUMO3, which may regulate the level of functional Cx43 gap junctions at the plasma membrane. May be desumoylated by SENP1 or SENP2. Post-translationally, S-nitrosylation at Cys-271 is enriched at the muscle endothelial gap junction in arteries, it augments channel permeability and may regulate of smooth muscle cell to endothelial cell communication. Acetylated in the developing cortex; leading to delocalization from the cell membrane.

The protein resides in the cell membrane. Its subcellular location is the cell junction. The protein localises to the gap junction. It localises to the endoplasmic reticulum. Gap junction protein that acts as a regulator of bladder capacity. A gap junction consists of a cluster of closely packed pairs of transmembrane channels, the connexons, through which materials of low MW diffuse from one cell to a neighboring cell. May play a critical role in the physiology of hearing by participating in the recycling of potassium to the cochlear endolymph. Negative regulator of bladder functional capacity: acts by enhancing intercellular electrical and chemical transmission, thus sensitizing bladder muscles to cholinergic neural stimuli and causing them to contract. May play a role in cell growth inhibition through the regulation of NOV expression and localization. Plays an essential role in gap junction communication in the ventricles. This Macaca fascicularis (Crab-eating macaque) protein is Gap junction alpha-1 protein (GJA1).